The sequence spans 85 residues: Large ribosomal subunit protein bL27 (85 aa).

It belongs to the bacterial ribosomal protein bL27 family.

This Sodalis glossinidius (strain morsitans) protein is Large ribosomal subunit protein bL27.